The following is a 185-amino-acid chain: Elongation factor P (185 aa).

It belongs to the elongation factor P family.

The protein localises to the cytoplasm. Its pathway is protein biosynthesis; polypeptide chain elongation. Involved in peptide bond synthesis. Stimulates efficient translation and peptide-bond synthesis on native or reconstituted 70S ribosomes in vitro. Probably functions indirectly by altering the affinity of the ribosome for aminoacyl-tRNA, thus increasing their reactivity as acceptors for peptidyl transferase. This Rippkaea orientalis (strain PCC 8801 / RF-1) (Cyanothece sp. (strain PCC 8801)) protein is Elongation factor P.